A 301-amino-acid polypeptide reads, in one-letter code: GPN-loop GTPase 3 (301 aa).

13-18 (GAGKST) serves as a coordination point for GTP. Positions 70–72 (GPN) match the Gly-Pro-Asn (GPN)-loop; involved in dimer interface motif. 176 to 179 (SKMD) provides a ligand contact to GTP. A disordered region spans residues 212-232 (IAEGQDAEDDESKAPDEKDQV). Basic and acidic residues predominate over residues 223-232 (SKAPDEKDQV).

This sequence belongs to the GPN-loop GTPase family. Heterodimers with GPN1 or GPN2. Binds to RNA polymerase II (RNAPII).

Functionally, small GTPase required for proper nuclear import of RNA polymerase II and III (RNAPII and RNAPIII). May act at an RNAP assembly step prior to nuclear import. This is GPN-loop GTPase 3 from Gibberella zeae (strain ATCC MYA-4620 / CBS 123657 / FGSC 9075 / NRRL 31084 / PH-1) (Wheat head blight fungus).